The chain runs to 343 residues: Mitochondrial amidoxime-reducing component 1 (343 aa).

Residues 1 to 25 (MSNTVFSGAVGPLRAAALSISRHRL) lie on the Mitochondrial matrix side of the membrane. Residues 26 to 44 (PLLCAAGLGLTAVASWMWW) traverse the membrane as a helical; Signal-anchor for type II membrane protein segment. Over 45–343 (RKRQGEAEDL…DPVYRVTRKG (299 aa)) the chain is Cytoplasmic. Lys-69, Ser-70, and Arg-94 together coordinate Mo-molybdopterin. Residues 95 to 186 (HWLVVTEEGN…SSQPYRLVHF (92 aa)) form an MOSC N-terminal region region. The MOSC domain occupies 181–339 (YRLVHFEADV…IRVGDPVYRV (159 aa)). Mo-molybdopterin is bound by residues Ser-215, Arg-242, Arg-276, Cys-277, and Tyr-321.

Requires Mo-molybdopterin as cofactor.

The protein resides in the mitochondrion outer membrane. It is found in the membrane. The catalysed reaction is N(omega)-hydroxy-L-arginine + 2 Fe(II)-[cytochrome b5] + 2 H(+) = L-arginine + 2 Fe(III)-[cytochrome b5] + H2O. Catalyzes the reduction of N-oxygenated molecules, acting as a counterpart of cytochrome P450 and flavin-containing monooxygenases in metabolic cycles. As a component of prodrug-converting system, reduces a multitude of N-hydroxylated prodrugs particularly amidoximes, leading to increased drug bioavailability. May be involved in mitochondrial N(omega)-hydroxy-L-arginine (NOHA) reduction, regulating endogenous nitric oxide levels and biosynthesis. Postulated to cleave the N-OH bond of N-hydroxylated substrates in concert with electron transfer from NADH to cytochrome b5 reductase then to cytochrome b5, the ultimate electron donor that primes the active site for substrate reduction. The protein is Mitochondrial amidoxime-reducing component 1 (mtarc1) of Xenopus laevis (African clawed frog).